A 594-amino-acid chain; its full sequence is Adenine deaminase 1 (594 aa).

The protein belongs to the metallo-dependent hydrolases superfamily. Adenine deaminase family. The cofactor is Mn(2+).

It catalyses the reaction adenine + H2O + H(+) = hypoxanthine + NH4(+). This is Adenine deaminase 1 from Jannaschia sp. (strain CCS1).